Reading from the N-terminus, the 651-residue chain is UvrABC system protein C (651 aa).

Residues Thr-21–Val-100 form the GIY-YIG domain. One can recognise a UVR domain in the interval Asp-210–Leu-245.

The protein belongs to the UvrC family. In terms of assembly, interacts with UvrB in an incision complex.

The protein resides in the cytoplasm. Functionally, the UvrABC repair system catalyzes the recognition and processing of DNA lesions. UvrC both incises the 5' and 3' sides of the lesion. The N-terminal half is responsible for the 3' incision and the C-terminal half is responsible for the 5' incision. The sequence is that of UvrABC system protein C from Synechococcus sp. (strain CC9311).